Here is a 446-residue protein sequence, read N- to C-terminus: Alkylglycerol monooxygenase (446 aa).

2 helical membrane passes run 43–63 (ATVY…AWKG) and 110–130 (WDSP…YYWF). One can recognise a Fatty acid hydroxylase domain in the interval 118-248 (LTFLGVDFGY…LIIWDRMFGT (131 aa)). The Histidine box-1 signature appears at 131 to 135 (HRMAH). Positions 144-148 (HQTHH) match the Histidine box-2 motif. Residues 167 to 187 (YFSWMFYWPMAFCIPPSVFAV) traverse the membrane as a helical segment. The Histidine box-3 signature appears at 220-224 (HRVHH). The next 3 membrane-spanning stretches (helical) occupy residues 339–359 (MMHF…KLIL), 362–382 (ATLL…GFIF), and 412–434 (VPYL…GLKA).

This sequence belongs to the sterol desaturase family. TMEM195 subfamily. It depends on Fe cation as a cofactor.

Its subcellular location is the endoplasmic reticulum membrane. The enzyme catalyses 1-O-(1,2-saturated-alkyl)-sn-glycerol + (6R)-L-erythro-5,6,7,8-tetrahydrobiopterin + O2 = a 1-(1-hydroxyalkyl)-sn-glycerol + (6R)-L-erythro-6,7-dihydrobiopterin + H2O. Functionally, glyceryl-ether monooxygenase that cleaves the O-alkyl bond of ether lipids. Ether lipids are essential components of brain membranes. The protein is Alkylglycerol monooxygenase (agmo) of Xenopus tropicalis (Western clawed frog).